The sequence spans 491 residues: Glutamyl-tRNA(Gln) amidotransferase subunit A (491 aa).

Residues Lys-76 and Ser-154 each act as charge relay system in the active site. Catalysis depends on Ser-178, which acts as the Acyl-ester intermediate.

Belongs to the amidase family. GatA subfamily. As to quaternary structure, heterotrimer of A, B and C subunits.

It carries out the reaction L-glutamyl-tRNA(Gln) + L-glutamine + ATP + H2O = L-glutaminyl-tRNA(Gln) + L-glutamate + ADP + phosphate + H(+). In terms of biological role, allows the formation of correctly charged Gln-tRNA(Gln) through the transamidation of misacylated Glu-tRNA(Gln) in organisms which lack glutaminyl-tRNA synthetase. The reaction takes place in the presence of glutamine and ATP through an activated gamma-phospho-Glu-tRNA(Gln). This chain is Glutamyl-tRNA(Gln) amidotransferase subunit A, found in Cereibacter sphaeroides (strain KD131 / KCTC 12085) (Rhodobacter sphaeroides).